A 117-amino-acid polypeptide reads, in one-letter code: V-type sodium ATPase subunit F (117 aa).

The tract at residues 1–20 (MARILTRIKEAEENNQKKEE) is disordered. Residues 7–20 (RIKEAEENNQKKEE) show a composition bias toward basic and acidic residues.

Belongs to the V-ATPase G subunit family.

Involved in ATP-driven sodium extrusion. This is V-type sodium ATPase subunit F (ntpF) from Enterococcus hirae (strain ATCC 9790 / DSM 20160 / JCM 8729 / LMG 6399 / NBRC 3181 / NCIMB 6459 / NCDO 1258 / NCTC 12367 / WDCM 00089 / R).